A 229-amino-acid polypeptide reads, in one-letter code: E3 ubiquitin ligase TRIM40 (229 aa).

Residues 14–57 (CPICQESLKEAVSTNCGHLFCRVCLTQHVEKASASGVFCCPLCR) form an RING-type zinc finger. The segment at 66-107 (GTGYICPNHQKRVCRFCEESRLLLCVECLVSPEHMSHHELTI) adopts a B box-type zinc-finger fold. Zn(2+) contacts are provided by Cys-71, His-74, Cys-93, and His-99. Residues 107–154 (IENALSHYKERLNRRSRKLRKDIAELQRLKAQQEKKLQALQQWLGQLE) are a coiled coil.

This sequence belongs to the TRIM/RBCC family. In terms of assembly, interacts with NEDD8.

The enzyme catalyses S-ubiquitinyl-[E2 ubiquitin-conjugating enzyme]-L-cysteine + [acceptor protein]-L-lysine = [E2 ubiquitin-conjugating enzyme]-L-cysteine + N(6)-ubiquitinyl-[acceptor protein]-L-lysine.. In terms of biological role, E3 ubiquitin-protein ligase that plays a role in the limitation of the innate immune response. Mediates inhibition of the RLR signaling pathway by ubiquitinating RIGI and IFIH1 receptors, leading to their proteasomal degradation. Also promotes the neddylation of IKBKG/NEMO, stabilizing NFKBIA, and thereby inhibiting of NF-kappa-B nuclear translocation and activation. This Pan troglodytes (Chimpanzee) protein is E3 ubiquitin ligase TRIM40 (TRIM40).